A 354-amino-acid polypeptide reads, in one-letter code: Glycerol-3-phosphate dehydrogenase [NAD(+)], glycosomal (354 aa).

Residues 15 to 20, F90, K118, and A150 each bind NAD(+); that span reads GSGAFG. Position 118 (K118) interacts with substrate. K203 functions as the Proton acceptor in the catalytic mechanism. NAD(+) contacts are provided by R267 and E293. 267–268 contributes to the substrate binding site; that stretch reads RN. The short motif at 352–354 is the Microbody targeting signal element; it reads SKM.

This sequence belongs to the NAD-dependent glycerol-3-phosphate dehydrogenase family.

Its subcellular location is the glycosome. It carries out the reaction sn-glycerol 3-phosphate + NAD(+) = dihydroxyacetone phosphate + NADH + H(+). The polypeptide is Glycerol-3-phosphate dehydrogenase [NAD(+)], glycosomal (GPD) (Trypanosoma brucei rhodesiense).